Consider the following 159-residue polypeptide: 6,7-dimethyl-8-ribityllumazine synthase (159 aa).

5-amino-6-(D-ribitylamino)uracil contacts are provided by residues phenylalanine 22, 56–58 (AFE), and 80–82 (AVI). 85-86 (AT) is a (2S)-2-hydroxy-3-oxobutyl phosphate binding site. Histidine 88 serves as the catalytic Proton donor. Position 113 (phenylalanine 113) interacts with 5-amino-6-(D-ribitylamino)uracil. Arginine 127 serves as a coordination point for (2S)-2-hydroxy-3-oxobutyl phosphate.

This sequence belongs to the DMRL synthase family.

The enzyme catalyses (2S)-2-hydroxy-3-oxobutyl phosphate + 5-amino-6-(D-ribitylamino)uracil = 6,7-dimethyl-8-(1-D-ribityl)lumazine + phosphate + 2 H2O + H(+). Its pathway is cofactor biosynthesis; riboflavin biosynthesis; riboflavin from 2-hydroxy-3-oxobutyl phosphate and 5-amino-6-(D-ribitylamino)uracil: step 1/2. In terms of biological role, catalyzes the formation of 6,7-dimethyl-8-ribityllumazine by condensation of 5-amino-6-(D-ribitylamino)uracil with 3,4-dihydroxy-2-butanone 4-phosphate. This is the penultimate step in the biosynthesis of riboflavin. This is 6,7-dimethyl-8-ribityllumazine synthase from Lactiplantibacillus plantarum (strain ATCC BAA-793 / NCIMB 8826 / WCFS1) (Lactobacillus plantarum).